Reading from the N-terminus, the 193-residue chain is Probable gluconokinase (193 aa).

18 to 25 (GTAGTGKS) provides a ligand contact to ATP.

Belongs to the gluconokinase GntK/GntV family.

It is found in the cytoplasm. The enzyme catalyses D-gluconate + ATP = 6-phospho-D-gluconate + ADP + H(+). It functions in the pathway carbohydrate acid metabolism; D-gluconate degradation. This is Probable gluconokinase from Saccharomyces cerevisiae (strain ATCC 204508 / S288c) (Baker's yeast).